Reading from the N-terminus, the 438-residue chain is 3-phosphoshikimate 1-carboxyvinyltransferase (438 aa).

Residues Lys-26, Ser-27, and Arg-31 each coordinate 3-phosphoshikimate. Lys-26 contacts phosphoenolpyruvate. Phosphoenolpyruvate-binding residues include Gly-99 and Arg-127. Positions 170, 171, 172, 199, 314, and 343 each coordinate 3-phosphoshikimate. Residue Gln-172 participates in phosphoenolpyruvate binding. The Proton acceptor role is filled by Glu-314. Arg-347, Arg-388, and Lys-413 together coordinate phosphoenolpyruvate.

Belongs to the EPSP synthase family. As to quaternary structure, monomer.

It is found in the cytoplasm. The enzyme catalyses 3-phosphoshikimate + phosphoenolpyruvate = 5-O-(1-carboxyvinyl)-3-phosphoshikimate + phosphate. It functions in the pathway metabolic intermediate biosynthesis; chorismate biosynthesis; chorismate from D-erythrose 4-phosphate and phosphoenolpyruvate: step 6/7. Functionally, catalyzes the transfer of the enolpyruvyl moiety of phosphoenolpyruvate (PEP) to the 5-hydroxyl of shikimate-3-phosphate (S3P) to produce enolpyruvyl shikimate-3-phosphate and inorganic phosphate. This chain is 3-phosphoshikimate 1-carboxyvinyltransferase, found in Mycobacterium sp. (strain JLS).